We begin with the raw amino-acid sequence, 322 residues long: NADH-quinone oxidoreductase subunit H (322 aa).

A run of 8 helical transmembrane segments spans residues 14–34, 81–101, 114–134, 149–169, 186–206, 237–257, 265–285, and 302–322; these read IFMH…YMSF, YIFV…IPVI, VGVL…LLAG, SIAQ…GIVA, LWNI…GMAL, FFIS…TLFF, FPPV…FVLI, and WKFL…YILI.

The protein belongs to the complex I subunit 1 family. As to quaternary structure, NDH-1 is composed of 13 different subunits. Subunits NuoA, H, J, K, L, M, N constitute the membrane sector of the complex.

The protein resides in the cell inner membrane. The enzyme catalyses a quinone + NADH + 5 H(+)(in) = a quinol + NAD(+) + 4 H(+)(out). Functionally, NDH-1 shuttles electrons from NADH, via FMN and iron-sulfur (Fe-S) centers, to quinones in the respiratory chain. The immediate electron acceptor for the enzyme in this species is believed to be ubiquinone. Couples the redox reaction to proton translocation (for every two electrons transferred, four hydrogen ions are translocated across the cytoplasmic membrane), and thus conserves the redox energy in a proton gradient. This subunit may bind ubiquinone. In Blochmanniella floridana, this protein is NADH-quinone oxidoreductase subunit H.